The chain runs to 37 residues: Pi-theraphotoxin-Hm3a (37 aa).

3 disulfide bridges follow: Cys-3/Cys-18, Cys-10/Cys-23, and Cys-17/Cys-33.

It belongs to the psalmotoxin-1 family. Expressed by the venom gland.

The protein resides in the secreted. Its function is as follows. This toxin acts on different isoforms of acid-sensing ion channel ASIC1 in a similar manner to psalmotoxin-1 (AC P60514). On ASIC1a homotrimer, it provokes a pH-dependent inhibition (IC(50)=39.7 nM on human and IC(50)=1.3 nM on rat channels), whereas it potentiates ASIC1b homotrimer and ASIC1a-ASIC1b heterotrimer (EC(50)=178.1 nM on human ASIC1b, EC(50)=46.5 nM on rat ASIC1b and EC(50)=17.4 nM on rat ASIC1a-ASIC1b channels). On rat ASIC1a, it acts by inhibiting channel currents by shifting the pH of half-maximal effect (pH(50)) of steady-state desensitization and activation to more alkaline values. The protein is Pi-theraphotoxin-Hm3a of Heteroscodra maculata (Togo starburst tarantula).